The following is a 405-amino-acid chain: L-rhamnonate dehydratase (405 aa).

2 residues coordinate substrate: histidine 33 and arginine 59. Aspartate 226, glutamate 252, and glutamate 280 together coordinate Mg(2+). The active-site Proton acceptor is histidine 329. Glutamate 349 contributes to the substrate binding site.

Belongs to the mandelate racemase/muconate lactonizing enzyme family. RhamD subfamily. As to quaternary structure, homooctamer; tetramer of dimers. Mg(2+) serves as cofactor.

It catalyses the reaction L-rhamnonate = 2-dehydro-3-deoxy-L-rhamnonate + H2O. Its function is as follows. Catalyzes the dehydration of L-rhamnonate to 2-keto-3-deoxy-L-rhamnonate (KDR). The polypeptide is L-rhamnonate dehydratase (Escherichia coli O45:K1 (strain S88 / ExPEC)).